The following is a 363-amino-acid chain: dTDP-3-amino-3,6-dideoxy-alpha-D-galactopyranose transaminase (363 aa).

Lysine 185 carries the post-translational modification N6-(pyridoxal phosphate)lysine.

It belongs to the DegT/DnrJ/EryC1 family. Requires pyridoxal 5'-phosphate as cofactor.

It carries out the reaction dTDP-3-amino-3,6-dideoxy-alpha-D-galactopyranose + 2-oxoglutarate = dTDP-3-dehydro-6-deoxy-alpha-D-galactose + L-glutamate. Specifically aminates dTDP-6-deoxy-D-xylohex-3-ulose to form dTDP-D-Fucp3N in the biosynthesis of dTDP-3-acetamido-3,6-dideoxy-alpha-D-galactose, a glycan chain of the S-layer. This Aneurinibacillus thermoaerophilus protein is dTDP-3-amino-3,6-dideoxy-alpha-D-galactopyranose transaminase (fdtB).